The primary structure comprises 251 residues: Aliphatic sulfonates import ATP-binding protein SsuB (251 aa).

The region spanning 3 to 231 is the ABC transporter domain; that stretch reads VSINEVSKYF…PRNKTSQSFQ (229 aa). 39–46 is a binding site for ATP; it reads GPSGCGKS.

It belongs to the ABC transporter superfamily. Aliphatic sulfonates importer (TC 3.A.1.17.2) family. In terms of assembly, the complex is composed of two ATP-binding proteins (SsuB), two transmembrane proteins (SsuC) and a solute-binding protein (SsuA).

The protein resides in the cell membrane. The catalysed reaction is ATP + H2O + aliphatic sulfonate-[sulfonate-binding protein]Side 1 = ADP + phosphate + aliphatic sulfonateSide 2 + [sulfonate-binding protein]Side 1.. Part of the ABC transporter complex SsuABC involved in aliphatic sulfonates import. Responsible for energy coupling to the transport system. The sequence is that of Aliphatic sulfonates import ATP-binding protein SsuB from Bacillus thuringiensis subsp. konkukian (strain 97-27).